The sequence spans 539 residues: Chloride channel CLIC-like protein 1 (539 aa).

Positions M1–A18 are cleaved as a signal peptide. Over H19–N184 the chain is Lumenal. The segment at K41–A61 is disordered. A helical transmembrane segment spans residues V185 to T205. The Cytoplasmic segment spans residues Y206 to R215. Residues I216–A236 traverse the membrane as a helical segment. The Lumenal portion of the chain corresponds to F237–E329. The helical transmembrane segment at I330–C350 threads the bilayer. Residues Y351–G539 lie on the Cytoplasmic side of the membrane. A disordered region spans residues R361 to G410. Basic and acidic residues predominate over residues G364–L389. S429, S433, and S459 each carry phosphoserine. The segment at D444–G539 is disordered. A compositionally biased stretch (polar residues) spans S475–K485. T476 bears the Phosphothreonine mark. 3 positions are modified to phosphoserine: S498, S513, and S521. Residues C512–S521 are compositionally biased toward low complexity.

This sequence belongs to the chloride channel MCLC family. As to quaternary structure, homomultimers. Interacts with mitochondrial protein PIGBOS1 (via C-terminus); the interaction occurs at the mitochondria-associated endoplasmic reticulum (ER) membrane, a zone of contact between the ER and mitochondrial membranes, but does not appear to play a role in ER-mitochondria tethering and is not affected by ER stress. Interacts with CALR. Expressed in cerebellum (at protein level).

Its subcellular location is the endoplasmic reticulum membrane. The catalysed reaction is chloride(in) = chloride(out). It carries out the reaction bromide(in) = bromide(out). The enzyme catalyses nitrate(in) = nitrate(out). It catalyses the reaction fluoride(in) = fluoride(out). Its activity is regulated as follows. Activated by membrane phosphatidylinositol 4,5-bisphosphate (PI(4,5)P2, PIP2). Inhibited by lumenal Ca(2+). Its function is as follows. Anion-selective channel with Ca(2+)-dependent and voltage-independent gating. Permeable to small monovalent anions with selectivity for bromide &gt; chloride &gt; nitrate &gt; fluoride. Operates in the endoplasmic reticulum (ER) membrane where it mediates chloride efflux to compensate for the loss of positive charges from the ER lumen upon Ca(2+) release. Contributes to the maintenance of ER Ca(2+) pools and activation of unfolded protein response to prevent accumulation of misfolded proteins in the ER lumen. Particularly involved in ER homeostasis mechanisms underlying motor neurons and retinal photoreceptors survival. The chain is Chloride channel CLIC-like protein 1 from Mus musculus (Mouse).